We begin with the raw amino-acid sequence, 339 residues long: uncharacterized protein (339 aa).

To bacterial alkanal monooxygenase alpha and beta chains.

This is an uncharacterized protein from Bacillus subtilis (strain 168).